Reading from the N-terminus, the 102-residue chain is Large ribosomal subunit protein bL21 (102 aa).

Belongs to the bacterial ribosomal protein bL21 family. Part of the 50S ribosomal subunit. Contacts protein L20.

In terms of biological role, this protein binds to 23S rRNA in the presence of protein L20. The sequence is that of Large ribosomal subunit protein bL21 from Cytophaga hutchinsonii (strain ATCC 33406 / DSM 1761 / CIP 103989 / NBRC 15051 / NCIMB 9469 / D465).